A 442-amino-acid polypeptide reads, in one-letter code: U11/U12 small nuclear ribonucleoprotein 65 kDa protein (442 aa).

One can recognise an RRM 1 domain in the interval 28 to 102 (VTLLVRHLPD…KVLQVQRANK (75 aa)). Disordered stretches follow at residues 101–138 (NKPN…QILS), 200–242 (LALP…GRKR), and 290–317 (SKVT…DSNL). The segment covering 102–116 (KPNDNKKSRQIEESV) has biased composition (basic and acidic residues). Residues 117 to 136 (TKGNAFSTVSTNNDSKSGQI) are compositionally biased toward polar residues. The segment covering 200–209 (LALPTPPLPK) has biased composition (pro residues). Over residues 297 to 307 (YKEESENEDPA) the composition is skewed to acidic residues. The RRM 2 domain occupies 352-434 (VVLYIKNLAK…KPMIIQFGRT (83 aa)).

Component of the U11/U12 snRNPs that are part of the U12-type spliceosome. Forms a complex with U12 snRNA. As to expression, ubiquitous.

It is found in the nucleus. Functionally, component of minor spliceosome required for U12-type intron splicing and alternative splicing of many introns. Binds specifically to U12 snRNA, which is necessary for branch-point site recognition. Required for normal plant development. The protein is U11/U12 small nuclear ribonucleoprotein 65 kDa protein (SNRNP65) of Arabidopsis thaliana (Mouse-ear cress).